A 177-amino-acid polypeptide reads, in one-letter code: NADH-quinone oxidoreductase subunit B (177 aa).

[4Fe-4S] cluster-binding residues include Cys56, Cys57, Cys121, and Cys151.

It belongs to the complex I 20 kDa subunit family. As to quaternary structure, NDH-1 is composed of 14 different subunits. Subunits NuoB, C, D, E, F, and G constitute the peripheral sector of the complex. Requires [4Fe-4S] cluster as cofactor.

It localises to the cell inner membrane. The enzyme catalyses a quinone + NADH + 5 H(+)(in) = a quinol + NAD(+) + 4 H(+)(out). NDH-1 shuttles electrons from NADH, via FMN and iron-sulfur (Fe-S) centers, to quinones in the respiratory chain. Couples the redox reaction to proton translocation (for every two electrons transferred, four hydrogen ions are translocated across the cytoplasmic membrane), and thus conserves the redox energy in a proton gradient. The sequence is that of NADH-quinone oxidoreductase subunit B from Jannaschia sp. (strain CCS1).